Consider the following 141-residue polypeptide: uncharacterized protein (141 aa).

The next 2 helical transmembrane spans lie at 12–32 (GIAG…TLVT) and 35–55 (PGRV…SATW).

The protein resides in the cell membrane. This is an uncharacterized protein from Mycobacterium tuberculosis (strain CDC 1551 / Oshkosh).